The chain runs to 908 residues: MAEVTVSELAKSVGAPVERILSQMQQAGLTHQSPDDVVSDEEKQKLLTFLKSSHGETVAEPKKITLKRKTTTTLKTGSGSGRKTVNVEVRKKRTYVKRDEVADEIEESAAVAEAEVAKVEEPVVEPVQEPEVAAEPEVVEAPEPEPVVEAIEEAPVEEPAAPAAPVISQTTTASSLVDDAEEMRIRAASARIKAEEERLAAIEKARKEKAAKPAPAPGPAAAAKEDARPTKHVEDLAKLKKPHDKKDEEFDEDGKKHNKKAGKAVKKVAGPKKVASALDYVEDKEEIEEVIHAPKPKRLSANRGPRPVIKVSNKHGFKKPTGKITYDVEIPETITVGELAQRMNVKAGEVVKCLMKMGTMATVNQPIDQETAQLVVEELGHKAVLISADAIEIKLQEEVAANVDGETIPRAPIVTVMGHVDHGKTSLLDYIRKAKVASGEAGGITQHIGAYRVQTSHGELTFLDTPGHAAFTAMRARGAQCTDVVILVVAADDGVMPQTEEAVQHARAAGVPLVVAINKMDKESADPDRVKNELSAKEVIPEDWGGDTQFIEVSAHTGQGIEELLEAVALQAELLELSAPKDVPARGVVVESRMDKGRGVVATVLVQGGDLKSGDILLAGQSFGRVRAMTNEFGEQVKTAGPSSPVEILGLDTPPQAGDEFLVVPDERKAREVAEFRAERERQEKLQRQQAAKLENMFAGIGENETKVLSVVLKTDVRGSLEAIQAALLDIGNDEVQVNIVGGGVGGITGNDVNLALTTGAIVLGFNVRADASARKLAETESIEIRYYSIIYQLIDEVKSALSGMLDPERVEEIVGIAEVRETFRSPKFGQVAGCMVVEGSVHRNKPIRVLRENVVIFEGELESLRRFKDDVSEVRNGTECGIGVKNYDVKVGDQIEVFDVKEVAREL.

Disordered stretches follow at residues 122 to 180 (PVVE…VDDA) and 203 to 267 (EKAR…AVKK). Acidic residues predominate over residues 132 to 143 (VAAEPEVVEAPE). Residues 157 to 166 (EEPAAPAAPV) are compositionally biased toward low complexity. The segment covering 223-248 (AKEDARPTKHVEDLAKLKKPHDKKDE) has biased composition (basic and acidic residues). Residues 256-267 (KHNKKAGKAVKK) show a composition bias toward basic residues. Positions 409 to 578 (PRAPIVTVMG…ALQAELLELS (170 aa)) constitute a tr-type G domain. A G1 region spans residues 418–425 (GHVDHGKT). Position 418–425 (418–425 (GHVDHGKT)) interacts with GTP. Positions 443–447 (GITQH) are G2. Residues 464–467 (DTPG) form a G3 region. GTP contacts are provided by residues 464–468 (DTPGH) and 518–521 (NKMD). The interval 518–521 (NKMD) is G4. Residues 554 to 556 (SAH) are G5.

The protein belongs to the TRAFAC class translation factor GTPase superfamily. Classic translation factor GTPase family. IF-2 subfamily.

It is found in the cytoplasm. One of the essential components for the initiation of protein synthesis. Protects formylmethionyl-tRNA from spontaneous hydrolysis and promotes its binding to the 30S ribosomal subunits. Also involved in the hydrolysis of GTP during the formation of the 70S ribosomal complex. This Saccharophagus degradans (strain 2-40 / ATCC 43961 / DSM 17024) protein is Translation initiation factor IF-2.